The following is a 285-amino-acid chain: Putative cuticle collagen 75 (285 aa).

Triple-helical region stretches follow at residues 87 to 116 (GRIG…PGEL) and 133 to 261 (GPKG…PGLD). The span at 207–231 (PGAPGIPGEEGLSGPTGQPGSPGSI) shows a compositional bias: low complexity. The tract at residues 207 to 257 (PGAPGIPGEEGLSGPTGQPGSPGSIGAMGYEGAYGDRGEPGPPGPIGRRGG) is disordered.

Belongs to the cuticular collagen family. Collagen polypeptide chains are complexed within the cuticle by disulfide bonds and other types of covalent cross-links.

Functionally, nematode cuticles are composed largely of collagen-like proteins. The cuticle functions both as an exoskeleton and as a barrier to protect the worm from its environment. The sequence is that of Putative cuticle collagen 75 (col-75) from Caenorhabditis elegans.